The sequence spans 510 residues: Bifunctional pantoate ligase/cytidylate kinase (510 aa).

Residues Met1–Val276 are pantoate--beta-alanine ligase. Residue Met29–His36 participates in ATP binding. His36 functions as the Proton donor in the catalytic mechanism. Gln61 serves as a coordination point for (R)-pantoate. Gln61 is a binding site for beta-alanine. Residue Gly150–Asp153 participates in ATP binding. Residue Gln156 participates in (R)-pantoate binding. Leu187 to Arg190 lines the ATP pocket. The cytidylate kinase stretch occupies residues Phe277 to Lys510.

It in the N-terminal section; belongs to the pantothenate synthetase family. In the C-terminal section; belongs to the cytidylate kinase family. Type 1 subfamily.

It localises to the cytoplasm. It catalyses the reaction (R)-pantoate + beta-alanine + ATP = (R)-pantothenate + AMP + diphosphate + H(+). The enzyme catalyses CMP + ATP = CDP + ADP. It carries out the reaction dCMP + ATP = dCDP + ADP. The protein operates within cofactor biosynthesis; (R)-pantothenate biosynthesis; (R)-pantothenate from (R)-pantoate and beta-alanine: step 1/1. Catalyzes the condensation of pantoate with beta-alanine in an ATP-dependent reaction via a pantoyl-adenylate intermediate. Its function is as follows. Catalyzes the transfer of a phosphate group from ATP to either CMP or dCMP to form CDP or dCDP and ADP, respectively. In Prochlorococcus marinus (strain MIT 9301), this protein is Bifunctional pantoate ligase/cytidylate kinase.